We begin with the raw amino-acid sequence, 161 residues long: NADH-quinone oxidoreductase subunit I (161 aa).

4Fe-4S ferredoxin-type domains are found at residues 52-82 and 92-121; these read LRRYPDGEERCIACKLCEAICPAQAITIEAK and TKYDIDMTKCIYCGLCQEACPVDAIVEGPN. The [4Fe-4S] cluster site is built by cysteine 62, cysteine 65, cysteine 68, cysteine 72, cysteine 101, cysteine 104, cysteine 107, and cysteine 111.

Belongs to the complex I 23 kDa subunit family. NDH-1 is composed of 14 different subunits. Subunits NuoA, H, J, K, L, M, N constitute the membrane sector of the complex. [4Fe-4S] cluster serves as cofactor.

The protein resides in the cell inner membrane. The catalysed reaction is a quinone + NADH + 5 H(+)(in) = a quinol + NAD(+) + 4 H(+)(out). Its function is as follows. NDH-1 shuttles electrons from NADH, via FMN and iron-sulfur (Fe-S) centers, to quinones in the respiratory chain. The immediate electron acceptor for the enzyme in this species is believed to be ubiquinone. Couples the redox reaction to proton translocation (for every two electrons transferred, four hydrogen ions are translocated across the cytoplasmic membrane), and thus conserves the redox energy in a proton gradient. This Orientia tsutsugamushi (strain Boryong) (Rickettsia tsutsugamushi) protein is NADH-quinone oxidoreductase subunit I.